Reading from the N-terminus, the 485-residue chain is Pentatricopeptide repeat-containing protein At1g62720 (485 aa).

PPR repeat units follow at residues 68-102 (SIVD…GIGH), 103-137 (DLYS…GYEP), 138-172 (DVVT…GFRP), 173-207 (DVVI…GVRA), 208-242 (DAVT…DIVP), 243-277 (NVIT…CVDP), 278-312 (DVFT…GCLP), 313-347 (DVVT…GLVG), 348-378 (DTIT…MDSR), 380-414 (NIRT…EIEL), 415-449 (DITT…GLKP), and 450-484 (DVVS…GLLP).

This sequence belongs to the PPR family. P subfamily.

The polypeptide is Pentatricopeptide repeat-containing protein At1g62720 (Arabidopsis thaliana (Mouse-ear cress)).